Here is a 179-residue protein sequence, read N- to C-terminus: Large ribosomal subunit protein uL5 (179 aa).

The protein belongs to the universal ribosomal protein uL5 family. In terms of assembly, part of the 50S ribosomal subunit; part of the 5S rRNA/L5/L18/L25 subcomplex. Contacts the 5S rRNA and the P site tRNA. Forms a bridge to the 30S subunit in the 70S ribosome.

Its function is as follows. This is one of the proteins that bind and probably mediate the attachment of the 5S RNA into the large ribosomal subunit, where it forms part of the central protuberance. In the 70S ribosome it contacts protein S13 of the 30S subunit (bridge B1b), connecting the 2 subunits; this bridge is implicated in subunit movement. Contacts the P site tRNA; the 5S rRNA and some of its associated proteins might help stabilize positioning of ribosome-bound tRNAs. This chain is Large ribosomal subunit protein uL5, found in Prochlorococcus marinus (strain MIT 9211).